Here is a 70-residue protein sequence, read N- to C-terminus: Small ribosomal subunit protein bS21 (70 aa).

This sequence belongs to the bacterial ribosomal protein bS21 family.

The protein is Small ribosomal subunit protein bS21 of Delftia acidovorans (strain DSM 14801 / SPH-1).